The chain runs to 364 residues: Developmentally-regulated GTP-binding protein 2 (364 aa).

Lys-21 carries the (3S)-3-hydroxylysine modification. The region spanning 63-288 is the OBG-type G domain; that stretch reads ARVALIGFPS…LLEMLWEYLA (226 aa). GTP contacts are provided by residues 69–76, 94–98, 115–118, 246–249, and 269–271; these read GFPSVGKS, FTTLT, DLPG, NKID, and SCG. Residues Ser-76 and Thr-96 each contribute to the Mg(2+) site. The TGS domain occupies 288–363; that stretch reads ALTCIYTKKR…EHEDVIQIVK (76 aa).

This sequence belongs to the TRAFAC class OBG-HflX-like GTPase superfamily. OBG GTPase family. As to quaternary structure, interacts with RWDD1; this interaction confers protection to polyubiquitination and proteolytic degradation. Interacts with JMJD7; this interaction is direct. The cofactor is Mg(2+). In terms of processing, hydroxylated (with S stereochemistry) at C-3 of Lys-21 by JMJD7; this modification hinders trypsin-catalyzed proteolysis in vitro. Polyubiquitinated. As to expression, highest levels in skeletal muscle, heart and kidney. Low levels in colon, thymus, spleen, small intestine, lung and Leukocytes.

It is found in the nucleus. It localises to the cytoplasm. The catalysed reaction is GTP + H2O = GDP + phosphate + H(+). Functionally, catalyzes the conversion of GTP to GDP through hydrolysis of the gamma-phosphate bond in GTP. When hydroxylated at C-3 of 'Lys-21' by JMJD7, may bind to RNA and play a role in translation. The sequence is that of Developmentally-regulated GTP-binding protein 2 from Homo sapiens (Human).